The chain runs to 764 residues: Zygote defective protein 12 (764 aa).

Over residues 1 to 20 (MLDLTNQESDSSENGNSKYA) the composition is skewed to polar residues. The segment at 1–33 (MLDLTNQESDSSENGNSKYADSTDGRGIGTSRR) is disordered. The interval 1–236 (MLDLTNQESD…ESSVITNGNG (236 aa)) is interaction with dli-1. A Calponin-homology (CH) domain is found at 43–169 (RKDLADLVFW…VSLAFIGKTQ (127 aa)). Coiled-coil stretches lie at residues 244–405 (LSAN…HVKT) and 436–692 (GLES…NRLI). Residues 732-752 (ALPWRFGISSMLIIFMVWFFI) form a helical membrane-spanning segment.

This sequence belongs to the hook family. As to quaternary structure, homodimer. Interacts with the dynein subunit dli-1 via its N-terminus. May interact with microtubules.

The protein resides in the nucleus membrane. Its subcellular location is the cytoplasm. It is found in the cytoskeleton. It localises to the microtubule organizing center. The protein localises to the centrosome. Cytoskeletal linker protein, which is essential for attachment of the centrosome to the nucleus. Required for dynein localization to the nuclear envelope. The chain is Zygote defective protein 12 (zyg-12) from Caenorhabditis briggsae.